Reading from the N-terminus, the 329-residue chain is Ribosomal RNA small subunit methyltransferase C (329 aa).

This sequence belongs to the methyltransferase superfamily. RsmC family. Monomer.

Its subcellular location is the cytoplasm. The enzyme catalyses guanosine(1207) in 16S rRNA + S-adenosyl-L-methionine = N(2)-methylguanosine(1207) in 16S rRNA + S-adenosyl-L-homocysteine + H(+). In terms of biological role, specifically methylates the guanine in position 1207 of 16S rRNA in the 30S particle. The sequence is that of Ribosomal RNA small subunit methyltransferase C from Actinobacillus pleuropneumoniae serotype 7 (strain AP76).